The chain runs to 146 residues: MISFFRAFFLIIIISFLIFVGAQARTLLGNYHDDEMLIELKLESGNYGRTPYKTPPPPTSSSPTHQEIVNGRHDSVLPPPSPKTDPIIGQLTTITTTPHHDDTVAAPPVGGRHDYVASPPPPKPQDEQRQIIITSSSSTLPLQASY.

The first 24 residues, 1-24 (MISFFRAFFLIIIISFLIFVGAQA), serve as a signal peptide directing secretion. Positions 25–48 (RTLLGNYHDDEMLIELKLESGNYG) are excised as a propeptide. The tract at residues 47–128 (YGRTPYKTPP…PPPPKPQDEQ (82 aa)) is disordered. A 4-hydroxyproline mark is found at Pro51, Pro55, Pro56, Pro57, Pro58, and Pro63. O-linked (Ara...) hydroxyproline glycosylation is found at Pro51, Pro55, Pro56, Pro57, Pro58, and Pro63. Residues 67–70 (EIVN) constitute a propeptide that is removed on maturation. 3 positions are modified to 4-hydroxyproline: Pro79, Pro80, and Pro82. Residues Pro79, Pro80, and Pro82 are each glycosylated (O-linked (Ara...) hydroxyproline). Residues 86–110 (PIIGQLTTITTTPHHDDTVAAPPVG) constitute a propeptide that is removed on maturation. Residues Pro119, Pro120, Pro121, and Pro122 each carry the 4-hydroxyproline modification. Residues Pro119, Pro120, Pro121, and Pro122 are each glycosylated (O-linked (Ara...) hydroxyproline). The propeptide occupies 131–146 (IIITSSSSTLPLQASY).

In terms of processing, O-glycosylated; contains pentose side chains. As to expression, leaves.

Its subcellular location is the secreted. Functionally, activates a lipid-based signal transduction pathway in which linolenic acid is converted to jasmonic acid, a potent activator of defense gene transcription. Induces synthesis of proteinase inhibitors I and II in leaves when supplied through cut stems. In Solanum lycopersicum (Tomato), this protein is Hydroxyproline-rich systemin.